A 1295-amino-acid chain; its full sequence is Phosphoribosylformylglycinamidine synthase (1295 aa).

The segment at 304 to 326 (WPGAATGSGGEIRDEGATGRGAK) is disordered. ATP-binding positions include 306 to 317 (GAATGSGGEIRD), 385 to 387 (TGY), and A677. Mg(2+)-binding residues include D678, E717, N721, and D884. The span at 995–1012 (LRDNPESADQEHASRQDD) shows a compositional bias: basic and acidic residues. The interval 995 to 1017 (LRDNPESADQEHASRQDDNDPGL) is disordered. One can recognise a Glutamine amidotransferase type-1 domain in the interval 1042-1295 (VAVLREQGVN…LFRNARKQLG (254 aa)). C1135 serves as the catalytic Nucleophile. Residues H1260 and E1262 contribute to the active site.

The protein in the N-terminal section; belongs to the FGAMS family. As to quaternary structure, monomer.

Its subcellular location is the cytoplasm. The enzyme catalyses N(2)-formyl-N(1)-(5-phospho-beta-D-ribosyl)glycinamide + L-glutamine + ATP + H2O = 2-formamido-N(1)-(5-O-phospho-beta-D-ribosyl)acetamidine + L-glutamate + ADP + phosphate + H(+). It participates in purine metabolism; IMP biosynthesis via de novo pathway; 5-amino-1-(5-phospho-D-ribosyl)imidazole from N(2)-formyl-N(1)-(5-phospho-D-ribosyl)glycinamide: step 1/2. In terms of biological role, phosphoribosylformylglycinamidine synthase involved in the purines biosynthetic pathway. Catalyzes the ATP-dependent conversion of formylglycinamide ribonucleotide (FGAR) and glutamine to yield formylglycinamidine ribonucleotide (FGAM) and glutamate. This chain is Phosphoribosylformylglycinamidine synthase, found in Sodalis glossinidius (strain morsitans).